Consider the following 772-residue polypeptide: A type blood N-acetyl-alpha-D-galactosamine deacetylase (772 aa).

The first 27 residues, 1–27 (MRNRRKAVSLLTGLLVTAQLFPTAALA), serve as a signal peptide directing secretion. The substrate site is built by Ser-87 and His-123. Residue Asp-126 coordinates a divalent metal cation. The segment at 180-402 (WSKPTSDAER…WRIGYAENSF (223 aa)) is deacetylase activity. Position 236 (Tyr-236) interacts with substrate. His-278 contacts a divalent metal cation. One can recognise an F5/8 type C domain in the interval 494-605 (SDDLEIAVVE…KDLVASGSDW (112 aa)). The CBM32 carbohydrate-binding domain stretch occupies residues 502–765 (VENPYTLIPQ…VCVSPVVDFD (264 aa)). A not required for activity on soluble substrates region spans residues 515-772 (TATATSVYGG…DFDYFSYVGE (258 aa)).

A divalent metal cation is required as a cofactor.

The catalysed reaction is an N-acetyl-alpha-D-galactosaminyl-(1-&gt;3)-[alpha-L-fucosyl-(1-&gt;2)]-beta-D-galactosyl derivative + H2O = an alpha-D-galactosaminyl-(1-&gt;3)-[alpha-L-fucosyl-(1-&gt;2)]-beta-D-galactosyl derivative + acetate. With respect to regulation, inhibited by EDTA. In terms of biological role, one of an enzyme pair that work together to convert the A antigen to the H antigen of the O blood type, which together release galactosamine. Catalyzes the first step in the conversion, generating the substrate for the subsequent enzyme (FpGalNase, AC P0DTR5). Works on many different A antigen subtypes. Glu-90 probably activates a nucleophilic water molecule to start the deacetylation reaction. The protein is A type blood N-acetyl-alpha-D-galactosamine deacetylase of Flavonifractor plautii (Fusobacterium plautii).